Reading from the N-terminus, the 899-residue chain is ATP-dependent DNA helicase DDX31 (899 aa).

Basic residues-rich tracts occupy residues Met-1–Lys-12 and Lys-21–Lys-31. Positions Met-1–Lys-142 are disordered. Residues Asn-76–Met-85 are compositionally biased toward acidic residues. Residues Asn-86–Asn-102 are compositionally biased toward low complexity. Acidic residues predominate over residues Asp-106–Phe-121. Residues Phe-173 to Lys-201 carry the Q motif motif. One can recognise a Helicase ATP-binding domain in the interval Ile-204 to Trp-433. Ser-217–Thr-224 provides a ligand contact to ATP. A DEAD box motif is present at residues Asp-332 to Asp-335. The span at Asn-463–His-472 shows a compositional bias: polar residues. The disordered stretch occupies residues Asn-463–Tyr-517. The span at Asp-476–Asn-487 shows a compositional bias: acidic residues. Residues Gly-488–Asp-503 show a composition bias toward low complexity. Residues Lys-593 to Cys-782 enclose the Helicase C-terminal domain.

Belongs to the DEAD box helicase family. DDX31/DBP7 subfamily.

The protein resides in the nucleus. It localises to the nucleolus. It carries out the reaction ATP + H2O = ADP + phosphate + H(+). Has DNA helicase activity and may also have RNA helicase activity; the DNA helicase direction was not determined. Shows ssDNA and RNA dependent ATPase activity. The sequence is that of ATP-dependent DNA helicase DDX31 (DDX31) from Plasmodium falciparum (isolate 3D7).